Consider the following 233-residue polypeptide: Partner of Y14 and mago (233 aa).

The segment at 1–153 (MTTYSTDSQG…SNNSDSTVDE (153 aa)) is disordered. The stretch at 62 to 97 (EVVQKAKEKRERERLRQAREEQQRKEQQNKKQQAGA) forms a coiled coil. A compositionally biased stretch (basic and acidic residues) spans 65–90 (QKAKEKRERERLRQAREEQQRKEQQN). Over residues 122 to 142 (KQPQQHTKSSQQKSTTAAAAA) the composition is skewed to low complexity. A coiled-coil region spans residues 167–199 (ADAQQLEVAKKLRKLRKKIREIEAIETKLRSTD).

The protein belongs to the pym family. As to quaternary structure, interacts (via N-terminus) with mago and tsu/Y14; the interaction is direct.

It localises to the cytoplasm. The protein localises to the nucleus. Functionally, regulator of the exon junction complex (EJC), a multiprotein complex that associates immediately upstream of the exon-exon junction on mRNAs and serves as a positional landmarks for the intron exon structure of genes and directs post-transcriptional processes in the cytoplasm such as mRNA export, nonsense-mediated mRNA decay (NMD) or translation. This chain is Partner of Y14 and mago, found in Anopheles gambiae (African malaria mosquito).